A 504-amino-acid chain; its full sequence is GTPase Der (504 aa).

The EngA-type G 1 domain maps to 4-168; the sequence is PVVALVGRPN…QVLAPFAEKM (165 aa). Residues 10 to 17, 57 to 61, and 120 to 123 each bind GTP; these read GRPNVGKS, DTGGI, and NKTD. Residues 168 to 179 show a composition bias toward basic and acidic residues; sequence MENADENDRTSE. The disordered stretch occupies residues 168 to 191; it reads MENADENDRTSEEEQDEWEQEFDF. The segment covering 180–191 has biased composition (acidic residues); it reads EEQDEWEQEFDF. Residues 216–389 form the EngA-type G 2 domain; the sequence is IKIAIVGRPN…SIKEAYACAT (174 aa). GTP-binding positions include 222 to 229, 269 to 273, and 334 to 337; these read GRPNVGKS, DTAGV, and NKWD. One can recognise a KH-like domain in the interval 390–474; it reads QKMTTSLLTR…PIRLLFQEGS (85 aa).

It belongs to the TRAFAC class TrmE-Era-EngA-EngB-Septin-like GTPase superfamily. EngA (Der) GTPase family. Associates with the 50S ribosomal subunit.

Functionally, GTPase that plays an essential role in the late steps of ribosome biogenesis. The sequence is that of GTPase Der from Haemophilus influenzae (strain ATCC 51907 / DSM 11121 / KW20 / Rd).